The primary structure comprises 180 residues: MLSPLKNISLGSELKSLWTVFLHLFQPKATIQYPEERPYIPPRWRGRIILSRDPDGEERCVACNLCAVACPVDCIALQKTEDEQGRWYPEFFRINFSRCIFCGFCEEACPTYAIQLTPDFEMGEYERPNLVYEKEDLLINGTGKYPDYNFYRVAGMAIGGKTKGEAENEESPVDVRSLMP.

4Fe-4S ferredoxin-type domains lie at 50–80 (LSRDPDGEERCVACNLCAVACPVDCIALQKT) and 90–119 (EFFRINFSRCIFCGFCEEACPTYAIQLTPD). Residues Cys-60, Cys-63, Cys-66, Cys-70, Cys-99, Cys-102, Cys-105, and Cys-109 each contribute to the [4Fe-4S] cluster site.

This sequence belongs to the complex I 23 kDa subunit family. In terms of assembly, NDH-1 is composed of 14 different subunits. Subunits NuoA, H, J, K, L, M, N constitute the membrane sector of the complex. [4Fe-4S] cluster is required as a cofactor.

The protein resides in the cell inner membrane. The catalysed reaction is a quinone + NADH + 5 H(+)(in) = a quinol + NAD(+) + 4 H(+)(out). In terms of biological role, NDH-1 shuttles electrons from NADH, via FMN and iron-sulfur (Fe-S) centers, to quinones in the respiratory chain. The immediate electron acceptor for the enzyme in this species is believed to be ubiquinone. Couples the redox reaction to proton translocation (for every two electrons transferred, four hydrogen ions are translocated across the cytoplasmic membrane), and thus conserves the redox energy in a proton gradient. The chain is NADH-quinone oxidoreductase subunit I 1 from Nitrosococcus oceani (strain ATCC 19707 / BCRC 17464 / JCM 30415 / NCIMB 11848 / C-107).